A 366-amino-acid chain; its full sequence is Aliphatic nitrilase (366 aa).

The 275-residue stretch at 8–282 (FKVAAVQAQP…EGILYADIDL (275 aa)) folds into the CN hydrolase domain. Catalysis depends on glutamate 48, which acts as the Proton acceptor. Lysine 131 acts as the Proton donor in catalysis. Cysteine 165 serves as the catalytic Nucleophile. A disordered region spans residues 346–366 (DEQRALPSTHSDETDRATASI). Positions 355–366 (HSDETDRATASI) are enriched in basic and acidic residues.

It belongs to the carbon-nitrogen hydrolase superfamily. Nitrilase family. Homodimer.

It catalyses the reaction an aliphatic nitrile + 2 H2O = a carboxylate + NH4(+). In Rhodococcus rhodochrous, this protein is Aliphatic nitrilase (nitA).